Reading from the N-terminus, the 622-residue chain is Galactolipid galactosyltransferase SFR2, chloroplastic (622 aa).

Residues 1-3 are Stromal-facing; the sequence is MEL. A helical; Signal-anchor transmembrane segment spans residues 4–24; it reads FALLIKVAGLLATVTVGANVV. Over 25-622 the chain is Cytoplasmic; sequence SYSRFRRQNL…LHPALASPFD (598 aa). A beta-D-glucoside contacts are provided by residues H222, 266 to 267, Y377, E429, W467, 474 to 475, and F483; these read NE and EW. The Proton donor role is filled by E267. E429 serves as the catalytic Nucleophile.

The protein belongs to the glycosyl hydrolase 1 family. Expressed in hypocotyls, cotyledons, stems, leaves, pedicels, sepals, anthers and pistils. Limited expression in roots. Not detected in petals or filaments.

The protein resides in the plastid. It is found in the chloroplast. It localises to the chloroplast outer membrane. It carries out the reaction 2 a 1,2-diacyl-3-O-(beta-D-galactosyl)-sn-glycerol = a 1,2-diacyl-3-O-[beta-D-galactosyl-(1-&gt;6)-beta-D-galactosyl]-sn-glycerol + a 1,2-diacyl-sn-glycerol. With respect to regulation, induced by MgCl(2). In terms of biological role, glycosyl hydrolase family protein acting primarily as a highly specific galactosyltransferase. Synthesizes digalactosyldiacylglycerol from monogalactosyldiacylglycerol in the absence of UDP-galactose in vitro. Hydrolyzes o- and p-nitrophenyl beta-D-glucoside in vitro. Plays a role in freezing tolerance. May play a role in chloroplast protection. This chain is Galactolipid galactosyltransferase SFR2, chloroplastic, found in Arabidopsis thaliana (Mouse-ear cress).